A 387-amino-acid chain; its full sequence is 3-dehydroquinate synthase (387 aa).

The protein belongs to the archaeal-type DHQ synthase family.

It carries out the reaction 2-amino-2,3,7-trideoxy-D-lyxo-hept-6-ulosonate + NAD(+) + H2O = 3-dehydroquinate + NH4(+) + NADH + H(+). Catalyzes the oxidative deamination and cyclization of 2-amino-3,7-dideoxy-D-threo-hept-6-ulosonic acid (ADH) to yield 3-dehydroquinate (DHQ), which is fed into the canonical shikimic pathway of aromatic amino acid biosynthesis. The sequence is that of 3-dehydroquinate synthase from Halobacterium salinarum (strain ATCC 29341 / DSM 671 / R1).